The chain runs to 186 residues: dCTP deaminase (186 aa).

Residue 107 to 112 (KSTYAR) participates in dCTP binding. Glutamate 133 acts as the Proton donor/acceptor in catalysis. Residues glutamine 152, tyrosine 166, and glutamine 176 each contribute to the dCTP site.

Belongs to the dCTP deaminase family. As to quaternary structure, homotrimer.

The enzyme catalyses dCTP + H2O + H(+) = dUTP + NH4(+). It functions in the pathway pyrimidine metabolism; dUMP biosynthesis; dUMP from dCTP (dUTP route): step 1/2. Functionally, catalyzes the deamination of dCTP to dUTP. The polypeptide is dCTP deaminase (Campylobacter jejuni subsp. jejuni serotype O:2 (strain ATCC 700819 / NCTC 11168)).